The chain runs to 170 residues: Lipoprotein signal peptidase (170 aa).

The next 2 helical transmembrane spans lie at 71–91 (YFFI…ILEN) and 97–116 (AIAY…DRVF). Catalysis depends on residues Asp122 and Asp140. A helical membrane pass occupies residues 131–151 (WHWPAFNLADIAIVLGALLFV).

It belongs to the peptidase A8 family.

Its subcellular location is the cell inner membrane. It carries out the reaction Release of signal peptides from bacterial membrane prolipoproteins. Hydrolyzes -Xaa-Yaa-Zaa-|-(S,diacylglyceryl)Cys-, in which Xaa is hydrophobic (preferably Leu), and Yaa (Ala or Ser) and Zaa (Gly or Ala) have small, neutral side chains.. The protein operates within protein modification; lipoprotein biosynthesis (signal peptide cleavage). This protein specifically catalyzes the removal of signal peptides from prolipoproteins. The polypeptide is Lipoprotein signal peptidase (Serratia marcescens).